Here is a 508-residue protein sequence, read N- to C-terminus: 2,3-bisphosphoglycerate-independent phosphoglycerate mutase (508 aa).

Mn(2+) is bound by residues Asp-11 and Ser-61. Ser-61 functions as the Phosphoserine intermediate in the catalytic mechanism. Substrate contacts are provided by residues His-122, 150–151 (RD), Arg-182, Arg-188, 257–260 (RPDR), and Lys-332. The Mn(2+) site is built by Asp-397, His-401, Asp-438, His-439, and His-456.

Belongs to the BPG-independent phosphoglycerate mutase family. As to quaternary structure, monomer. Mn(2+) serves as cofactor.

The catalysed reaction is (2R)-2-phosphoglycerate = (2R)-3-phosphoglycerate. It functions in the pathway carbohydrate degradation; glycolysis; pyruvate from D-glyceraldehyde 3-phosphate: step 3/5. Its function is as follows. Catalyzes the interconversion of 2-phosphoglycerate and 3-phosphoglycerate. This Mycoplasma pneumoniae (strain ATCC 29342 / M129 / Subtype 1) (Mycoplasmoides pneumoniae) protein is 2,3-bisphosphoglycerate-independent phosphoglycerate mutase.